A 275-amino-acid chain; its full sequence is NAD kinase (275 aa).

Residue D68 is the Proton acceptor of the active site. Residues 68-69 (DG), R73, 136-137 (NE), K147, R164, D166, 177-182 (TAYAMS), A201, and Q236 contribute to the NAD(+) site.

This sequence belongs to the NAD kinase family. A divalent metal cation serves as cofactor.

Its subcellular location is the cytoplasm. The enzyme catalyses NAD(+) + ATP = ADP + NADP(+) + H(+). Involved in the regulation of the intracellular balance of NAD and NADP, and is a key enzyme in the biosynthesis of NADP. Catalyzes specifically the phosphorylation on 2'-hydroxyl of the adenosine moiety of NAD to yield NADP. The protein is NAD kinase of Methanosarcina barkeri (strain Fusaro / DSM 804).